Reading from the N-terminus, the 95-residue chain is Antitoxin VapB (95 aa).

Functionally, antitoxin component of a type II toxin-antitoxin (TA) system. Partially neutralizes the RNase activity of cognate toxin VapC. In Rickettsia bellii (strain RML369-C), this protein is Antitoxin VapB.